Consider the following 207-residue polypeptide: Putative 3-methyladenine DNA glycosylase (207 aa).

This sequence belongs to the DNA glycosylase MPG family.

This is Putative 3-methyladenine DNA glycosylase from Listeria monocytogenes serotype 4b (strain CLIP80459).